The primary structure comprises 523 residues: MLVELAITLLVIALFIHLRPTPSAKSKSLRHLPNPPSPKPRLPFVGHLHLLDKPLLHNSLIDLSKRYGPLYSLYFGSMPTVVVSTPELFKLFLQTHEASSFNTRFQTPAIRRLTYDNSVAMVPFGPYWKFIRKLIMNDLLNATTVNKLRPLRSQEIRKVLRVMALSAESQVPLNVTEELLKWTNSTISRMMLGEAEEIRDIARDVLKIFGEYSLTDFIWPLKKLKVGQYEKRIDDIFNRFDPVIERVIKKRQEIRKKRKERNGEVEEGEQSVVFLDTLLDFAEDETMEIKITKEQIKGLVVDFFSAGTDSTAVATEWALSELINNPRVLQKAREEVDAVVGKDRLVDEADVQNLPYIRSIVKETFRMHPPLPVVKRKCVQECEIDGYAIPEGALILFNVWAVGRDPKYWDRPTEFRPERFLENVGEGDQAVDLRGQHFQLLPFGSGRRMCPGVNLATAGMATLLASVIQCFDLSVVGPQGKILKGNDAKVSMEESAGLTVPRAHNLVCVPVARSSAVPKLFSS.

Residues leucine 2–proline 22 form a helical membrane-spanning segment. Cysteine 450 serves as a coordination point for heme.

The protein belongs to the cytochrome P450 family. Heme is required as a cofactor.

Its subcellular location is the microsome membrane. The catalysed reaction is (2S)-liquiritigenin + reduced [NADPH--hemoprotein reductase] + O2 = (2R,3S)-2,4',7-trihydroxyisoflavanone + oxidized [NADPH--hemoprotein reductase] + H2O + H(+). The enzyme catalyses (2S)-naringenin + reduced [NADPH--hemoprotein reductase] + O2 = 2-hydroxy-2,3-dihydrogenistein + oxidized [NADPH--hemoprotein reductase] + H2O + H(+). Its function is as follows. 2-hydroxyisoflavanone synthase, which catalyzes the hydroxylation associated with 1,2-aryl migration of flavanones. Converts liquiritigenin and naringenin into highly unstable precursors of the isoflavones daidzein and genistein. This Glycyrrhiza uralensis (Chinese licorice) protein is 2-hydroxyisoflavanone synthase (CYP93C2).